We begin with the raw amino-acid sequence, 146 residues long: Deoxyuridine 5'-triphosphate nucleotidohydrolase (146 aa).

Residues 65 to 67, asparagine 78, and 82 to 84 contribute to the substrate site; these read RSG and TID.

The protein belongs to the dUTPase family. It depends on Mg(2+) as a cofactor.

It carries out the reaction dUTP + H2O = dUMP + diphosphate + H(+). Its pathway is pyrimidine metabolism; dUMP biosynthesis; dUMP from dCTP (dUTP route): step 2/2. Its function is as follows. This enzyme is involved in nucleotide metabolism: it produces dUMP, the immediate precursor of thymidine nucleotides and it decreases the intracellular concentration of dUTP so that uracil cannot be incorporated into DNA. This is Deoxyuridine 5'-triphosphate nucleotidohydrolase from Treponema pallidum subsp. pallidum (strain SS14).